A 272-amino-acid chain; its full sequence is F-actin-capping protein subunit beta (272 aa).

This sequence belongs to the F-actin-capping protein beta subunit family. As to quaternary structure, component of the F-actin capping complex, composed of a heterodimer of an alpha and a beta subunit.

It is found in the cytoplasm. It localises to the cytoskeleton. Functionally, F-actin-capping proteins bind in a Ca(2+)-independent manner to the fast growing ends of actin filaments (barbed end) thereby blocking the exchange of subunits at these ends. Unlike other capping proteins (such as gelsolin and severin), these proteins do not sever actin filaments. This Dictyostelium discoideum (Social amoeba) protein is F-actin-capping protein subunit beta (acpA).